Reading from the N-terminus, the 1089-residue chain is Platelet-derived growth factor receptor alpha (1089 aa).

The N-terminal stretch at 1-24 is a signal peptide; that stretch reads MGTSHQVFLVLSCLLTGPGLISCQ. 5 consecutive Ig-like C2-type domains span residues 25 to 113, 117 to 201, 202 to 306, 319 to 410, and 414 to 517; these read LLLP…SEIE, IYIY…FKTS, EFNV…KRVT, PTFG…FELS, and PASI…LKLV. Topologically, residues 25–528 are extracellular; it reads LLLPSILPNE…PTLRSELTVA (504 aa). N-linked (GlcNAc...) asparagine glycans are attached at residues N42, N76, N89, N103, and N179. C49 and C100 are joined by a disulfide. 2 disulfide bridges follow: C150–C189 and C235–C290. N-linked (GlcNAc...) asparagine glycans are attached at residues N353, N359, N458, N468, and N506. C435 and C501 are oxidised to a cystine. A helical transmembrane segment spans residues 529 to 549; the sequence is AAVLVLLVIVIVSLIVLVVIW. The Cytoplasmic segment spans residues 550-1089; it reads KQKPRYEIRW…SSDLVEDSFL (540 aa). A phosphotyrosine; by autocatalysis mark is found at Y572 and Y574. Positions 593 to 954 constitute a Protein kinase domain; sequence LVLGRILGSG…HLSEIVENLL (362 aa). Residues 599 to 607 and K627 contribute to the ATP site; that span reads LGSGAFGKV. Residues Y720, Y731, Y742, Y754, Y762, and Y768 each carry the phosphotyrosine; by autocatalysis modification. D818 functions as the Proton acceptor in the catalytic mechanism. 3 positions are modified to phosphotyrosine; by autocatalysis: Y849, Y988, and Y1018. Residues 1018 to 1089 form a disordered region; the sequence is YIIPLPDIDP…SSDLVEDSFL (72 aa). Positions 1041–1059 are enriched in polar residues; it reads SSQTSEESAIETGSSSSTF. Acidic residues predominate over residues 1065-1089; sequence ETIEDIDMMDDIGIDSSDLVEDSFL.

The protein belongs to the protein kinase superfamily. Tyr protein kinase family. CSF-1/PDGF receptor subfamily. As to quaternary structure, interacts with homodimeric PDGFA, PDGFB and PDGFC, and with heterodimers formed by PDGFA and PDGFB. Monomer in the absence of bound ligand. Interaction with dimeric PDGFA, PDGFB and/or PDGFC leads to receptor dimerization, where both PDGFRA homodimers and heterodimers with PDGFRB are observed. Interacts (tyrosine phosphorylated) with SHB (via SH2 domain). Interacts (tyrosine phosphorylated) with SHF (via SH2 domain). Interacts (tyrosine phosphorylated) with SRC (via SH2 domain). Interacts (tyrosine phosphorylated) with PIK3R1. Interacts (tyrosine phosphorylated) with PLCG1 (via SH2 domain). Interacts (tyrosine phosphorylated) with CRK, GRB2 and GRB7. Interacts with CD248; this interaction promotes PDGF receptor signaling pathway. In terms of processing, ubiquitinated, leading to its internalization and degradation. Post-translationally, autophosphorylated on tyrosine residues upon ligand binding. Autophosphorylation occurs in trans, i.e. one subunit of the dimeric receptor phosphorylates tyrosine residues on the other subunit. Phosphorylation at Tyr-731 and Tyr-742 is important for interaction with PIK3R1. Phosphorylation at Tyr-720 and Tyr-754 is important for interaction with PTPN11. Phosphorylation at Tyr-762 is important for interaction with CRK. Phosphorylation at Tyr-572 and Tyr-574 is important for interaction with SRC and SRC family members. Phosphorylation at Tyr-988 and Tyr-1018 is important for interaction with PLCG1. In terms of tissue distribution, focally expressed in cortical interstitial cells and highly expressed in the interstitium of the papillary region. Also expressed by adventitial cells in arterial vessels. Up-regulated in areas of renal fibrosis. In mice with unilateral ureteral obstruction, expression in cortical interstitial cells becomes prominent at day 4 which increases progressively until day 14.

The protein resides in the cell membrane. Its subcellular location is the cell projection. The protein localises to the cilium. It localises to the golgi apparatus. It carries out the reaction L-tyrosyl-[protein] + ATP = O-phospho-L-tyrosyl-[protein] + ADP + H(+). Present in an inactive conformation in the absence of bound ligand. Binding of PDGFA and/or PDGFB leads to dimerization and activation by autophosphorylation on tyrosine residues. Inhibited by imatinib, nilotinib and sorafenib. In terms of biological role, tyrosine-protein kinase that acts as a cell-surface receptor for PDGFA, PDGFB and PDGFC and plays an essential role in the regulation of embryonic development, cell proliferation, survival and chemotaxis. Depending on the context, promotes or inhibits cell proliferation and cell migration. Plays an important role in the differentiation of bone marrow-derived mesenchymal stem cells. Required for normal skeleton development and cephalic closure during embryonic development. Required for normal development of the mucosa lining the gastrointestinal tract, and for recruitment of mesenchymal cells and normal development of intestinal villi. Plays a role in cell migration and chemotaxis in wound healing. Plays a role in platelet activation, secretion of agonists from platelet granules, and in thrombin-induced platelet aggregation. Binding of its cognate ligands - homodimeric PDGFA, homodimeric PDGFB, heterodimers formed by PDGFA and PDGFB or homodimeric PDGFC -leads to the activation of several signaling cascades; the response depends on the nature of the bound ligand and is modulated by the formation of heterodimers between PDGFRA and PDGFRB. Phosphorylates PIK3R1, PLCG1, and PTPN11. Activation of PLCG1 leads to the production of the cellular signaling molecules diacylglycerol and inositol 1,4,5-trisphosphate, mobilization of cytosolic Ca(2+) and the activation of protein kinase C. Phosphorylates PIK3R1, the regulatory subunit of phosphatidylinositol 3-kinase, and thereby mediates activation of the AKT1 signaling pathway. Mediates activation of HRAS and of the MAP kinases MAPK1/ERK2 and/or MAPK3/ERK1. Promotes activation of STAT family members STAT1, STAT3 and STAT5A and/or STAT5B. Receptor signaling is down-regulated by protein phosphatases that dephosphorylate the receptor and its down-stream effectors, and by rapid internalization of the activated receptor. This chain is Platelet-derived growth factor receptor alpha (Pdgfra), found in Mus musculus (Mouse).